The sequence spans 499 residues: Nucleoside transporter 2 (499 aa).

Residues 1-30 (MTGQSAAVEGSNSALPWYRMGFHTLAEFNT) are Cytoplasmic-facing. A run of 5 helical transmembrane segments spans residues 31-51 (YVTF…VTSA), 112-132 (LFLG…VPAA), 133-153 (TIPT…MGGL), 179-199 (WGLT…QVSM), and 212-232 (IYFG…VLLR). Residues 255–267 (VEPEESQDSKEPA) show a composition bias toward basic and acidic residues. The segment at 255–276 (VEPEESQDSKEPATGDVAEAPK) is disordered. The N-linked (GlcNAc...) asparagine glycan is linked to Asn326. The next 5 helical transmembrane spans lie at 350-370 (LCAF…FFLV), 378-398 (MTII…LLMI), 406-426 (KLVI…VLCV), 428-448 (GFIP…LTNG), and 475-495 (MLAG…SLAI).

This sequence belongs to the SLC29A/ENT transporter (TC 2.A.57) family.

The protein localises to the cell membrane. It is found in the cell projection. It localises to the cilium. Its subcellular location is the flagellum. The catalysed reaction is inosine(in) + H(+)(in) = inosine(out) + H(+)(out). It carries out the reaction guanosine(in) + H(+)(in) = guanosine(out) + H(+)(out). The enzyme catalyses xanthosine(in) + H(+)(in) = xanthosine(out) + H(+)(out). Its function is as follows. High affinity nucleoside:H(+) symporter; transports inosine and guanosine. Can transport xanthosine. The sequence is that of Nucleoside transporter 2 from Leishmania donovani.